Consider the following 359-residue polypeptide: Outer membrane protein A (359 aa).

The first 21 residues, 1–21 (MKKTAIALAVALAGFATVAQA), serve as a signal peptide directing secretion. Beta stranded transmembrane passes span 27 to 37 (TWYTGAKLGWS), 62 to 73 (QLGAGAFLGYQA), 77 to 85 (LGFELGYDW), 103 to 114 (QGVQLAAKLSYP), 119 to 127 (LDIYTRLGG), 154 to 163 (PLAAVGVEYA), 168 to 175 (WATRLDYQ), and 194 to 202 (MLSLGVSYR). 5 consecutive repeat copies span residues 210 to 211 (AP), 212 to 213 (AP), 214 to 215 (AP), 216 to 217 (AP), and 218 to 219 (AP). The interval 210-219 (APAPAPAPAP) is 5 X 2 AA tandem repeats of A-P. Residues 221–351 (VETKRFTLKS…RVEIEVKGIK (131 aa)) form the OmpA-like domain. Cys-322 and Cys-336 are joined by a disulfide.

The protein belongs to the outer membrane OOP (TC 1.B.6) superfamily. OmpA family. In terms of assembly, monomer and homodimer.

Its subcellular location is the cell outer membrane. Functionally, with TolR probably plays a role in maintaining the position of the peptidoglycan cell wall in the periplasm. Acts as a porin with low permeability that allows slow penetration of small solutes; an internal gate slows down solute passage. This is Outer membrane protein A from Serratia marcescens.